Here is a 405-residue protein sequence, read N- to C-terminus: Elongation factor Tu (405 aa).

The 206-residue stretch at 10-215 (KPHVNVGTIG…AVDSYIPTPE (206 aa)) folds into the tr-type G domain. A G1 region spans residues 19 to 26 (GHVDHGKT). 19–26 (GHVDHGKT) provides a ligand contact to GTP. Mg(2+) is bound at residue Thr26. Positions 61–65 (GITIN) are G2. A G3 region spans residues 82-85 (DCPG). GTP-binding positions include 82–86 (DCPGH) and 137–140 (NKVD). The tract at residues 137–140 (NKVD) is G4. The interval 175–177 (SAL) is G5.

This sequence belongs to the TRAFAC class translation factor GTPase superfamily. Classic translation factor GTPase family. EF-Tu/EF-1A subfamily. In terms of assembly, monomer.

Its subcellular location is the cytoplasm. The catalysed reaction is GTP + H2O = GDP + phosphate + H(+). In terms of biological role, GTP hydrolase that promotes the GTP-dependent binding of aminoacyl-tRNA to the A-site of ribosomes during protein biosynthesis. The sequence is that of Elongation factor Tu from Deinonema sp.